The chain runs to 119 residues: Na(+)/H(+) antiporter subunit G (119 aa).

The next 3 helical transmembrane spans lie at 7-29, 44-61, and 66-88; these read IISI…IIRF, TLGV…FFLV, and VGKL…MMMG.

It belongs to the CPA3 antiporters (TC 2.A.63) subunit G family. In terms of assembly, forms a heterooligomeric complex that consists of seven subunits: MrpA, MrpB, MrpC, MrpD, MrpE, MrpF and MrpG.

It is found in the cell membrane. Mnh complex is a Na(+)Li(+)/H(+) antiporter involved in Na(+) and/or Li(+) excretion and Na(+) resistance. Na(+)/H(+) antiport consumes a transmembrane electrical potential, and is thus inferred to be electrogenic. Does not transport K(+), Ca(2+) or Mg(2+). This chain is Na(+)/H(+) antiporter subunit G (mrpG), found in Alkalihalophilus pseudofirmus (strain ATCC BAA-2126 / JCM 17055 / OF4) (Bacillus pseudofirmus).